Consider the following 608-residue polypeptide: Protein UL27 (608 aa).

Residues 1–13 (MNPVDQPPPPPLT) are compositionally biased toward pro residues. A disordered region spans residues 1–33 (MNPVDQPPPPPLTQQPEEQAKEDHDDGDERLFR). Over residues 18–33 (EQAKEDHDDGDERLFR) the composition is skewed to basic and acidic residues.

It belongs to the herpesviridae U4 family. Interacts with host KAT5, PSME3 and EP400.

It is found in the host nucleus. The protein localises to the host nucleolus. Promotes a cell cycle arrest in G0/G1 by inducing the proteasomal degradation of host histone acetyltransferase KAT5/Tip60. The protein is Protein UL27 (UL27) of Homo sapiens (Human).